A 1755-amino-acid polypeptide reads, in one-letter code: Transposon Ty1-PL Gag-Pol polyprotein (1755 aa).

Polar residues-rich tracts occupy residues 1-23 (MESQ…SVTS), 48-60 (TKAN…TPAS), and 127-152 (QSQF…GNTF). Disordered stretches follow at residues 1–93 (MESQ…MMTQ), 126–174 (PQSQ…PPPM), and 352–421 (GSRN…SKST). The span at 153-165 (TDSSSADSDMTST) shows a compositional bias: low complexity. The interval 299 to 401 (NNGIHINNKV…NSKSKTARAH (103 aa)) is RNA-binding. Low complexity predominate over residues 402-418 (NVSTSNNSPSTDNDSIS). Ser-416 is modified (phosphoserine). The For protease activity; shared with dimeric partner role is filled by Asp-461. Residues 583-640 (NVHTSESTRKYPYPFIHRMLAHANAQTIRYSLKNNTITYFNESDVDWSSAIDYQCPDC) are integrase-type zinc finger-like. The Integrase catalytic domain occupies 660–835 (NSYEPFQYLH…AGLDISTLLP (176 aa)). Residues Asp-671 and Asp-736 each coordinate Mg(2+). Disordered stretches follow at residues 956 to 1087 (SKAV…ETEK), 1092 to 1111 (RSPS…NIVP), and 1130 to 1187 (DLPL…DNET). Residues 960 to 969 (SPTDSTPPST) show a composition bias toward low complexity. Residues 1005–1015 (STPQISNIEST) show a composition bias toward polar residues. Positions 1038–1053 (ESSHASKSKDFRHSDS) are enriched in basic and acidic residues. Polar residues-rich tracts occupy residues 1054 to 1082 (YSEN…QISD) and 1101 to 1111 (PENNSSHNIVP). A Bipartite nuclear localization signal motif is present at residues 1178-1212 (KKRSLEDNETEIKVSRDTWNTKNMRSLEPPRSKKR). The Reverse transcriptase Ty1/copia-type domain maps to 1338 to 1476 (NNYYITQLDI…DILGLEIKYQ (139 aa)). Mg(2+) contacts are provided by Asp-1346, Asp-1427, Asp-1428, Asp-1610, Glu-1652, and Asp-1685. An RNase H Ty1/copia-type domain is found at 1610 to 1752 (DASYGNQPYY…IKTFKLLTNK (143 aa)).

As to quaternary structure, the capsid protein forms a homotrimer, from which the VLPs are assembled. The protease is a homodimer, whose active site consists of two apposed aspartic acid residues. In terms of processing, initially, virus-like particles (VLPs) are composed of the structural unprocessed proteins Gag and Gag-Pol, and also contain the host initiator methionine tRNA (tRNA(i)-Met) which serves as a primer for minus-strand DNA synthesis, and a dimer of genomic Ty RNA. Processing of the polyproteins occurs within the particle and proceeds by an ordered pathway, called maturation. First, the protease (PR) is released by autocatalytic cleavage of the Gag-Pol polyprotein yielding capsid protein p45 and a Pol-p154 precursor protein. This cleavage is a prerequisite for subsequent processing of Pol-p154 at the remaining sites to release the mature structural and catalytic proteins. Maturation takes place prior to the RT reaction and is required to produce transposition-competent VLPs.

Its subcellular location is the cytoplasm. It localises to the nucleus. The catalysed reaction is DNA(n) + a 2'-deoxyribonucleoside 5'-triphosphate = DNA(n+1) + diphosphate. It catalyses the reaction Endonucleolytic cleavage to 5'-phosphomonoester.. In terms of biological role, capsid protein (CA) is the structural component of the virus-like particle (VLP), forming the shell that encapsulates the retrotransposons dimeric RNA genome. The particles are assembled from trimer-clustered units and there are holes in the capsid shells that allow for the diffusion of macromolecules. CA also has nucleocapsid-like chaperone activity, promoting primer tRNA(i)-Met annealing to the multipartite primer-binding site (PBS), dimerization of Ty1 RNA and initiation of reverse transcription. Functionally, the aspartyl protease (PR) mediates the proteolytic cleavages of the Gag and Gag-Pol polyproteins after assembly of the VLP. Its function is as follows. Reverse transcriptase/ribonuclease H (RT) is a multifunctional enzyme that catalyzes the conversion of the retro-elements RNA genome into dsDNA within the VLP. The enzyme displays a DNA polymerase activity that can copy either DNA or RNA templates, and a ribonuclease H (RNase H) activity that cleaves the RNA strand of RNA-DNA heteroduplexes during plus-strand synthesis and hydrolyzes RNA primers. The conversion leads to a linear dsDNA copy of the retrotransposon that includes long terminal repeats (LTRs) at both ends. Integrase (IN) targets the VLP to the nucleus, where a subparticle preintegration complex (PIC) containing at least integrase and the newly synthesized dsDNA copy of the retrotransposon must transit the nuclear membrane. Once in the nucleus, integrase performs the integration of the dsDNA into the host genome. This is Transposon Ty1-PL Gag-Pol polyprotein (TY1B-PL) from Saccharomyces cerevisiae (strain ATCC 204508 / S288c) (Baker's yeast).